The primary structure comprises 340 residues: Methionine import ATP-binding protein MetN 2 (340 aa).

The ABC transporter domain maps to 2 to 241 (ITLQNVVKEY…PQEKVTQRFV (240 aa)). Residue 38–45 (GYSGAGKS) coordinates ATP.

The protein belongs to the ABC transporter superfamily. Methionine importer (TC 3.A.1.24) family. As to quaternary structure, the complex is composed of two ATP-binding proteins (MetN), two transmembrane proteins (MetI) and a solute-binding protein (MetQ).

The protein localises to the cell membrane. It carries out the reaction L-methionine(out) + ATP + H2O = L-methionine(in) + ADP + phosphate + H(+). It catalyses the reaction D-methionine(out) + ATP + H2O = D-methionine(in) + ADP + phosphate + H(+). Part of the ABC transporter complex MetNIQ involved in methionine import. Responsible for energy coupling to the transport system. This Listeria monocytogenes serovar 1/2a (strain ATCC BAA-679 / EGD-e) protein is Methionine import ATP-binding protein MetN 2.